Reading from the N-terminus, the 91-residue chain is MTEQKNKTSLIEFPCTFPLKVMGAVHPEFEQAVLDTVRLHAPDTQAHHITTRPSSKGNYTGATVQVKVENQEQLDNIYRALTSHKLVKVVL.

This sequence belongs to the UPF0250 family.

The protein is UPF0250 protein NMC1112 of Neisseria meningitidis serogroup C / serotype 2a (strain ATCC 700532 / DSM 15464 / FAM18).